Consider the following 118-residue polypeptide: Acidic phospholipase A2 (118 aa).

The Ca(2+) site is built by Tyr-25, Gly-27, and Gly-29. The active site involves His-45. Asp-46 provides a ligand contact to Ca(2+). Asp-86 is an active-site residue.

It belongs to the phospholipase A2 family. Group II subfamily. D49 sub-subfamily. Requires Ca(2+) as cofactor. Six disulfide bonds are present. Expressed by the venom gland.

Its subcellular location is the secreted. It carries out the reaction a 1,2-diacyl-sn-glycero-3-phosphocholine + H2O = a 1-acyl-sn-glycero-3-phosphocholine + a fatty acid + H(+). Its function is as follows. PLA2 catalyzes the calcium-dependent hydrolysis of the 2-acyl groups in 3-sn-phosphoglycerides. The chain is Acidic phospholipase A2 from Bitis gabonica (Gaboon adder).